We begin with the raw amino-acid sequence, 156 residues long: SsrA-binding protein (156 aa).

A compositionally biased stretch (basic and acidic residues) spans K135–R150. A disordered region spans residues K135–T156.

It belongs to the SmpB family.

The protein localises to the cytoplasm. Its function is as follows. Required for rescue of stalled ribosomes mediated by trans-translation. Binds to transfer-messenger RNA (tmRNA), required for stable association of tmRNA with ribosomes. tmRNA and SmpB together mimic tRNA shape, replacing the anticodon stem-loop with SmpB. tmRNA is encoded by the ssrA gene; the 2 termini fold to resemble tRNA(Ala) and it encodes a 'tag peptide', a short internal open reading frame. During trans-translation Ala-aminoacylated tmRNA acts like a tRNA, entering the A-site of stalled ribosomes, displacing the stalled mRNA. The ribosome then switches to translate the ORF on the tmRNA; the nascent peptide is terminated with the 'tag peptide' encoded by the tmRNA and targeted for degradation. The ribosome is freed to recommence translation, which seems to be the essential function of trans-translation. In Legionella pneumophila (strain Corby), this protein is SsrA-binding protein.